Reading from the N-terminus, the 446-residue chain is UDP-N-acetylmuramoylalanine--D-glutamate ligase (446 aa).

ATP is bound at residue 112-118 (GTNGKST).

It belongs to the MurCDEF family.

Its subcellular location is the cytoplasm. The enzyme catalyses UDP-N-acetyl-alpha-D-muramoyl-L-alanine + D-glutamate + ATP = UDP-N-acetyl-alpha-D-muramoyl-L-alanyl-D-glutamate + ADP + phosphate + H(+). It participates in cell wall biogenesis; peptidoglycan biosynthesis. Cell wall formation. Catalyzes the addition of glutamate to the nucleotide precursor UDP-N-acetylmuramoyl-L-alanine (UMA). The sequence is that of UDP-N-acetylmuramoylalanine--D-glutamate ligase from Baumannia cicadellinicola subsp. Homalodisca coagulata.